We begin with the raw amino-acid sequence, 373 residues long: GDSL esterase/lipase LIP-4 (373 aa).

The signal sequence occupies residues 1–32; it reads MATLFLYSNTFSFFFITLVSLALLILRQPSRA. Ser-47 functions as the Nucleophile in the catalytic mechanism. The N-linked (GlcNAc...) asparagine glycan is linked to Asn-93. Catalysis depends on residues Asp-339 and His-342.

This sequence belongs to the 'GDSL' lipolytic enzyme family.

The protein localises to the secreted. In Arabidopsis thaliana (Mouse-ear cress), this protein is GDSL esterase/lipase LIP-4 (LIP4).